The chain runs to 782 residues: uncharacterized protein (782 aa).

The segment at residues 22 to 50 (CRECHRLKLKCDRVWPCENCKKRGIPNLC) is a DNA-binding region (zn(2)-C6 fungal-type). Disordered stretches follow at residues 105–126 (GEKPAEDTKDENRSQPIHDPDH) and 645–665 (VPSSRPNSKSPDDSSMRAEKA). Positions 654–665 (SPDDSSMRAEKA) are enriched in basic and acidic residues.

Its subcellular location is the nucleus. This is an uncharacterized protein from Schizosaccharomyces pombe (strain 972 / ATCC 24843) (Fission yeast).